The chain runs to 557 residues: Calcium-dependent protein kinase 4 (557 aa).

Residues 1-72 (MGNTCRGSIG…LVSPRKASMN (72 aa)) form a disordered region. Glycine 2 is lipidated: N-myristoyl glycine. Positions 15 to 27 (QGYTQPEDSSCST) are enriched in polar residues. Over residues 28 to 48 (NHNPSSGNSYSSSDNFSPTSN) the composition is skewed to low complexity. The Protein kinase domain occupies 94-352 (YTLGRKLGQG…AHEVLCHPWI (259 aa)). Residues 100 to 108 (LGQGQFGTT) and lysine 123 contribute to the ATP site. The Proton acceptor role is filled by aspartate 218. The interval 358-388 (APDRALDPAVLSRLKQFSAMNKLKKMALRVI) is autoinhibitory domain. 4 consecutive EF-hand domains span residues 395–430 (EEIA…YGST), 431–466 (LKDT…LNKL), 467–502 (EREE…HNMT), and 506–536 (FEDI…GNPC). Ca(2+) contacts are provided by aspartate 408, aspartate 410, serine 412, glutamate 419, aspartate 444, aspartate 446, serine 448, threonine 450, glutamate 455, aspartate 480, aspartate 482, serine 484, tyrosine 486, glutamate 491, aspartate 514, aspartate 516, aspartate 518, arginine 520, and glutamate 525.

It belongs to the protein kinase superfamily. Ser/Thr protein kinase family. CDPK subfamily.

Its subcellular location is the membrane. It catalyses the reaction L-seryl-[protein] + ATP = O-phospho-L-seryl-[protein] + ADP + H(+). The enzyme catalyses L-threonyl-[protein] + ATP = O-phospho-L-threonyl-[protein] + ADP + H(+). Activated by calcium. Autophosphorylation may play an important role in the regulation of the kinase activity. Functionally, regulates the production of reactive oxygen species (ROS) by NADPH oxidase. This Solanum tuberosum (Potato) protein is Calcium-dependent protein kinase 4 (CPK4).